The following is a 568-amino-acid chain: Sesquiterpene synthase 14 (568 aa).

D319, D323, D463, and E471 together coordinate Mg(2+). The DDXXD motif motif lies at 319–323 (DDLYD).

It belongs to the terpene synthase family. Tpsa subfamily. Mg(2+) is required as a cofactor. It depends on Mn(2+) as a cofactor. Mostly expressed in roots, to a lower extent in flowers and, at low levels, in fruits.

It carries out the reaction (2Z,6Z)-farnesyl diphosphate = (E)-alpha-bisabolene + diphosphate. The enzyme catalyses (2Z,6Z)-farnesyl diphosphate = beta-bisabolene + diphosphate. It catalyses the reaction (2E,6E)-farnesyl diphosphate = beta-bisabolene + diphosphate. The catalysed reaction is (2E,6E)-farnesyl diphosphate = (Z)-gamma-bisabolene + diphosphate. It carries out the reaction (2E,6E)-farnesyl diphosphate = (E)-gamma-bisabolene + diphosphate. The enzyme catalyses (2Z,6Z)-farnesyl diphosphate = (E)-gamma-bisabolene + diphosphate. It functions in the pathway secondary metabolite biosynthesis; terpenoid biosynthesis. Sesquiterpene synthase involved in the biosynthesis of volatile compounds. Mediates the conversion of (2E,6E)-farnesyl diphosphate ((EE)-FPP) into beta-bisabolene, and of (2Z,6Z)-farnesyl diphosphate ((ZZ)-FPP) into alpha-bisabolene, but also smaller amounts of (Z)-gamma-bisabolene, (E)-gamma-bisabolene and nerolidol. The protein is Sesquiterpene synthase 14 of Solanum lycopersicum (Tomato).